The primary structure comprises 478 residues: MDVHLGNWRLCGRRCGRLAHVVLPEAFLDRHGLAEDAGAEFFVQTRFTGSLRPSSYVRVIGAFFGGGSGDEIARRDRRSALNLVLSLPLLADGDGRYDPHNIATLKVRSGDGRRLVFVDFFYLSLLGAQMPRGPESEGEGGKDGGAGRGDGEASRESPLERIAAEASGPGPGSGRGRSAGGRRASPLSVLSGLLDNKYTQIAKHHRALEDPGAVRGVNIEPDRRDHGNLAGVGKRKVRCALNLIDLKRDDITFTSSTHLLSGTRFTLCHYPRPVAPPGGAPWESTLDGLSERQLRGVDPLAALILGFDFLERAQTGLVNSLARECENGGLKIFQRLPVCVEKKHDIRGVLGDHFTEACHVLARQVGESCAWVRACVSGERGHVGLWADFLNLWEAGPSTLGVDLSYLFSPGPPDDESAFWARLLGSDRLLDAIKTGARAVLVVDSQLAAWLLLPGGFAIKGRYSLSREDIQITVGRYG.

Residues 131 to 184 are disordered; it reads PRGPESEGEGGKDGGAGRGDGEASRESPLERIAAEASGPGPGSGRGRSAGGRRA. Residues 149–163 are compositionally biased toward basic and acidic residues; the sequence is GDGEASRESPLERIA. Gly residues predominate over residues 169–179; that stretch reads PGPGSGRGRSA.

The protein belongs to the herpesviridae CVC1 protein family. Interacts (via C-terminus) with capsid vertex component 2/CVC2.

It localises to the virion. The protein resides in the host nucleus. Its function is as follows. Capsid vertex-specific component that plays a role during viral DNA encapsidation, assuring correct genome cleavage and presumably stabilizing capsids that contain full-length viral genomes. The protein is Capsid vertex component 1 of Equus caballus (Horse).